The sequence spans 536 residues: Glycine--tRNA ligase (536 aa).

Residues 56 to 67 (LVSPAGAPSTFE) form an insert region. The substrate site is built by Arg-106 and Glu-213. Residues 245–247 (RNE), 255–260 (FRSREF), and 333–334 (EL) contribute to the ATP site. Position 260 to 264 (260 to 264 (FEQME)) interacts with substrate. The interval 350-372 (EGKLDPATNPMTVELNEHGKPKH) is insert. 396–400 (EPSAG) lines the substrate pocket. Residue 400–403 (GADR) coordinates ATP.

Belongs to the class-II aminoacyl-tRNA synthetase family. As to quaternary structure, homodimer.

The protein resides in the cytoplasm. It carries out the reaction tRNA(Gly) + glycine + ATP = glycyl-tRNA(Gly) + AMP + diphosphate. Functionally, catalyzes the attachment of glycine to tRNA(Gly). The sequence is that of Glycine--tRNA ligase from Rhodopirellula baltica (strain DSM 10527 / NCIMB 13988 / SH1).